The following is a 337-amino-acid chain: Anthranilate phosphoribosyltransferase (337 aa).

Residues G81, 84–85 (GD), T89, 91–94 (NIST), 109–117 (KHGNRALSS), and T121 contribute to the 5-phospho-alpha-D-ribose 1-diphosphate site. G81 provides a ligand contact to anthranilate. A Mg(2+)-binding site is contributed by S93. N112 is a binding site for anthranilate. R167 serves as a coordination point for anthranilate. Mg(2+)-binding residues include D225 and E226.

The protein belongs to the anthranilate phosphoribosyltransferase family. Homodimer. Mg(2+) serves as cofactor.

The catalysed reaction is N-(5-phospho-beta-D-ribosyl)anthranilate + diphosphate = 5-phospho-alpha-D-ribose 1-diphosphate + anthranilate. Its pathway is amino-acid biosynthesis; L-tryptophan biosynthesis; L-tryptophan from chorismate: step 2/5. Functionally, catalyzes the transfer of the phosphoribosyl group of 5-phosphorylribose-1-pyrophosphate (PRPP) to anthranilate to yield N-(5'-phosphoribosyl)-anthranilate (PRA). The chain is Anthranilate phosphoribosyltransferase from Rhizobium meliloti (strain 1021) (Ensifer meliloti).